A 613-amino-acid chain; its full sequence is Proteasome-associated ATPase (613 aa).

The interval 1-29 is disordered; the sequence is MSESERSEGFPEGFAGAGSGSLSSEDAAE. Positions 23–100 form a coiled coil; it reads SSEDAAELEA…LREEVDRLGQ (78 aa). 300 to 305 is a binding site for ATP; sequence GCGKTL. Residue K595 forms an Isoglutamyl lysine isopeptide (Lys-Gln) (interchain with Q-Cter in protein Pup) linkage. The docks into pockets in the proteasome alpha-ring stretch occupies residues 612 to 613; the sequence is YL.

The protein belongs to the AAA ATPase family. In terms of assembly, homohexamer. Assembles into a hexameric ring structure that caps the 20S proteasome core. Strongly interacts with the prokaryotic ubiquitin-like protein Pup through a hydrophobic interface; the interacting region of ARC lies in its N-terminal coiled-coil domain. There is one Pup binding site per ARC hexamer ring. Upon ATP-binding, the C-terminus of ARC interacts with the alpha-rings of the proteasome core, possibly by binding to the intersubunit pockets.

It functions in the pathway protein degradation; proteasomal Pup-dependent pathway. Functionally, ATPase which is responsible for recognizing, binding, unfolding and translocation of pupylated proteins into the bacterial 20S proteasome core particle. May be essential for opening the gate of the 20S proteasome via an interaction with its C-terminus, thereby allowing substrate entry and access to the site of proteolysis. Thus, the C-termini of the proteasomal ATPase may function like a 'key in a lock' to induce gate opening and therefore regulate proteolysis. The sequence is that of Proteasome-associated ATPase from Mycolicibacterium smegmatis (strain ATCC 700084 / mc(2)155) (Mycobacterium smegmatis).